Consider the following 289-residue polypeptide: tRNA pseudouridine synthase B (289 aa).

Catalysis depends on D55, which acts as the Nucleophile. A disordered region spans residues P243–R289. The span at A265–R289 shows a compositional bias: basic and acidic residues.

This sequence belongs to the pseudouridine synthase TruB family. Type 1 subfamily.

It catalyses the reaction uridine(55) in tRNA = pseudouridine(55) in tRNA. Its function is as follows. Responsible for synthesis of pseudouridine from uracil-55 in the psi GC loop of transfer RNAs. This chain is tRNA pseudouridine synthase B, found in Chlorobium luteolum (strain DSM 273 / BCRC 81028 / 2530) (Pelodictyon luteolum).